Reading from the N-terminus, the 658-residue chain is Probable rhamnogalacturonate lyase B (658 aa).

A signal peptide spans 1–19 (MRFAIPLGAACAWAGVALA). N-linked (GlcNAc...) asparagine glycans are attached at residues Asn-110, Asn-143, Asn-239, Asn-280, Asn-522, Asn-530, Asn-564, Asn-571, Asn-592, and Asn-633.

It belongs to the polysaccharide lyase 4 family.

It is found in the secreted. The catalysed reaction is Endotype eliminative cleavage of L-alpha-rhamnopyranosyl-(1-&gt;4)-alpha-D-galactopyranosyluronic acid bonds of rhamnogalacturonan I domains in ramified hairy regions of pectin leaving L-rhamnopyranose at the reducing end and 4-deoxy-4,5-unsaturated D-galactopyranosyluronic acid at the non-reducing end.. Pectinolytic enzymes consist of four classes of enzymes: pectin lyase, polygalacturonase, pectin methylesterase and rhamnogalacturonase. Degrades the rhamnogalacturonan I (RG-I) backbone of pectin. The sequence is that of Probable rhamnogalacturonate lyase B (rglB) from Neosartorya fischeri (strain ATCC 1020 / DSM 3700 / CBS 544.65 / FGSC A1164 / JCM 1740 / NRRL 181 / WB 181) (Aspergillus fischerianus).